A 376-amino-acid chain; its full sequence is Putative peptide import ATP-binding protein BMEII0205 (376 aa).

Positions 1–25 are disordered; sequence MPLRPALHLRTGKLRQTPTHNEPDG. The ABC transporter domain maps to 64-314; that stretch reads VRTDDLVRDF…PLHPYSRALL (251 aa). 106-113 is a binding site for ATP; sequence GESGSGKS.

Belongs to the ABC transporter superfamily. The complex is composed of two ATP-binding proteins (BMEII0205 and BMEII0206), two transmembrane proteins (BMEII0207/BMEII0208 and BMEII0209) and a solute-binding protein (BMEII0210).

Its subcellular location is the cell inner membrane. Functionally, probably part of an ABC transporter complex that could be involved in peptide import. Probably responsible for energy coupling to the transport system. This Brucella melitensis biotype 1 (strain ATCC 23456 / CCUG 17765 / NCTC 10094 / 16M) protein is Putative peptide import ATP-binding protein BMEII0205.